Here is a 184-residue protein sequence, read N- to C-terminus: Gremlin-1 (184 aa).

The N-terminal stretch at 1–24 (MNRTAYTVGALLLLLGTLLPTAEG) is a signal peptide. Positions 23–77 (EGKKKGSQGAIPPPDKAQHNDSEQTQSPPQPGSRTRGRGQGRGTAMPGEEVLESS) are disordered. Asn42 is a glycosylation site (N-linked (GlcNAc...) asparagine). 4 cysteine pairs are disulfide-bonded: Cys94-Cys144, Cys108-Cys158, Cys118-Cys176, and Cys122-Cys178. Positions 94–184 (CKTQPLKQTI…QCRCISIDLD (91 aa)) constitute a CTCK domain.

Belongs to the DAN family. In terms of assembly, homodimer; can also form homooligomers. Interacts with BMP2; can form higher oligomers with BMP2. Interacts with SLIT1 and SLIT2 in a glycosylation-dependent manner. Highly expressed in spleen and to a lesser extent in lung, skeletal muscle and kidney. Expressed only in non-transformed cells or primary fibroblasts in culture but not in established transformed or tumor derived cell lines. Broadly expressed in limb bud mesenchyme but restricted to the distal limb bud mesenchyme and concentrated posteriorly. Expressed in ovary especially in granulosa cells of follicles of type 4.

The protein localises to the secreted. Functionally, cytokine that may play an important role during carcinogenesis and metanephric kidney organogenesis, as BMP a antagonist required for early limb outgrowth and patterning in maintaining the FGF4-SHH feedback loop. Down-regulates the BMP4 signaling in a dose-dependent manner. Antagonist of BMP2; inhibits BMP2-mediated differentiation of osteoblasts (in vitro). Acts as inhibitor of monocyte chemotaxis. This chain is Gremlin-1 (Grem1), found in Mus musculus (Mouse).